The sequence spans 135 residues: NADH-quinone oxidoreductase subunit K (135 aa).

Helical transmembrane passes span 33–53 (VLGL…FAIG), 63–83 (FLFM…AFVV), and 95–115 (IMFI…LAIL).

The protein belongs to the complex I subunit 4L family. NDH-1 is composed of 14 different subunits. Subunits NuoA, H, J, K, L, M, N constitute the membrane sector of the complex.

It localises to the cell inner membrane. It carries out the reaction a quinone + NADH + 5 H(+)(in) = a quinol + NAD(+) + 4 H(+)(out). Its function is as follows. NDH-1 shuttles electrons from NADH, via FMN and iron-sulfur (Fe-S) centers, to quinones in the respiratory chain. The immediate electron acceptor for the enzyme in this species is believed to be ubiquinone. Couples the redox reaction to proton translocation (for every two electrons transferred, four hydrogen ions are translocated across the cytoplasmic membrane), and thus conserves the redox energy in a proton gradient. This chain is NADH-quinone oxidoreductase subunit K, found in Psychrobacter cryohalolentis (strain ATCC BAA-1226 / DSM 17306 / VKM B-2378 / K5).